A 1396-amino-acid polypeptide reads, in one-letter code: DNA-directed RNA polymerase subunit beta' (1396 aa).

Zn(2+) contacts are provided by C71, C73, C86, and C89. The Mg(2+) site is built by D462, D464, and D466. Zn(2+) is bound by residues C810, C884, C891, and C894. The span at 1372 to 1382 (DEQLAQQREDA) shows a compositional bias: basic and acidic residues. The tract at residues 1372 to 1396 (DEQLAQQREDAMEPLPAEIALSDAE) is disordered.

It belongs to the RNA polymerase beta' chain family. As to quaternary structure, the RNAP catalytic core consists of 2 alpha, 1 beta, 1 beta' and 1 omega subunit. When a sigma factor is associated with the core the holoenzyme is formed, which can initiate transcription. It depends on Mg(2+) as a cofactor. Requires Zn(2+) as cofactor.

It carries out the reaction RNA(n) + a ribonucleoside 5'-triphosphate = RNA(n+1) + diphosphate. DNA-dependent RNA polymerase catalyzes the transcription of DNA into RNA using the four ribonucleoside triphosphates as substrates. This is DNA-directed RNA polymerase subunit beta' from Caulobacter vibrioides (strain ATCC 19089 / CIP 103742 / CB 15) (Caulobacter crescentus).